The sequence spans 886 residues: Translation initiation factor IF-2 (886 aa).

Disordered stretches follow at residues leucine 46–arginine 91 and glutamate 121–threonine 297. Polar residues predominate over residues serine 72–lysine 82. 3 stretches are compositionally biased toward basic and acidic residues: residues alanine 130–lysine 163, alanine 175–leucine 239, and arginine 246–threonine 260. Residues proline 386–threonine 555 form the tr-type G domain. Positions glycine 395–threonine 402 are G1. A GTP-binding site is contributed by glycine 395 to threonine 402. The segment at glycine 420–histidine 424 is G2. The tract at residues aspartate 441–glycine 444 is G3. GTP contacts are provided by residues aspartate 441 to histidine 445 and asparagine 495 to aspartate 498. Residues asparagine 495 to aspartate 498 form a G4 region. Residues serine 531–lysine 533 are G5.

This sequence belongs to the TRAFAC class translation factor GTPase superfamily. Classic translation factor GTPase family. IF-2 subfamily.

It is found in the cytoplasm. Functionally, one of the essential components for the initiation of protein synthesis. Protects formylmethionyl-tRNA from spontaneous hydrolysis and promotes its binding to the 30S ribosomal subunits. Also involved in the hydrolysis of GTP during the formation of the 70S ribosomal complex. The sequence is that of Translation initiation factor IF-2 from Pseudoalteromonas translucida (strain TAC 125).